The chain runs to 198 residues: Molybdenum cofactor guanylyltransferase (198 aa).

Residues leucine 14 to glycine 16, lysine 27, aspartate 73, and aspartate 103 each bind GTP. Aspartate 103 contributes to the Mg(2+) binding site.

This sequence belongs to the MobA family. As to quaternary structure, monomer. Mg(2+) is required as a cofactor.

The protein localises to the cytoplasm. The enzyme catalyses Mo-molybdopterin + GTP + H(+) = Mo-molybdopterin guanine dinucleotide + diphosphate. Functionally, transfers a GMP moiety from GTP to Mo-molybdopterin (Mo-MPT) cofactor (Moco or molybdenum cofactor) to form Mo-molybdopterin guanine dinucleotide (Mo-MGD) cofactor. In Pseudomonas aeruginosa (strain LESB58), this protein is Molybdenum cofactor guanylyltransferase.